The chain runs to 346 residues: Putative [LysW]-L-2-aminoadipate/[LysW]-L-glutamate phosphate reductase (346 aa).

12–15 (SGFT) is a binding site for NADP(+). Residue Cys-147 is part of the active site. A disordered region spans residues 178-198 (GSSEGGAGGGDASSHPERSGV). Residue Asn-310 participates in NADP(+) binding.

Belongs to the NAGSA dehydrogenase family. Type 1 subfamily. LysY sub-subfamily.

It localises to the cytoplasm. It catalyses the reaction [amino-group carrier protein]-C-terminal-N-(1-carboxy-5-oxopentan-1-yl)-L-glutamine + phosphate + NADP(+) = [amino-group carrier protein]-C-terminal-N-(1-carboxy-5-phosphooxy-5-oxopentan-1-yl)-L-glutamine + NADPH + H(+). The enzyme catalyses [amino-group carrier protein]-C-terminal-gamma-(L-glutamyl-5-semialdehyde)-L-glutamate + phosphate + NADP(+) = [amino-group carrier protein]-C-terminal-gamma-(5-phospho-L-glutamyl)-L-glutamate + NADPH + H(+). It participates in amino-acid biosynthesis; L-lysine biosynthesis via AAA pathway; L-lysine from L-alpha-aminoadipate (Thermus route): step 3/5. The protein operates within amino-acid biosynthesis; L-arginine biosynthesis. In terms of biological role, involved in both the arginine and lysine biosynthetic pathways. This chain is Putative [LysW]-L-2-aminoadipate/[LysW]-L-glutamate phosphate reductase, found in Haloquadratum walsbyi (strain DSM 16790 / HBSQ001).